A 162-amino-acid polypeptide reads, in one-letter code: 2-C-methyl-D-erythritol 2,4-cyclodiphosphate synthase (162 aa).

Asp10 and His12 together coordinate a divalent metal cation. 4-CDP-2-C-methyl-D-erythritol 2-phosphate-binding positions include 10–12 (DVH) and 36–37 (HS). His44 is a binding site for a divalent metal cation. 4-CDP-2-C-methyl-D-erythritol 2-phosphate is bound by residues 58 to 60 (DIG), 63 to 67 (FPDTD), 102 to 108 (AQAPRMA), 134 to 137 (TTSE), Phe141, and Arg144.

The protein belongs to the IspF family. Homotrimer. It depends on a divalent metal cation as a cofactor.

The catalysed reaction is 4-CDP-2-C-methyl-D-erythritol 2-phosphate = 2-C-methyl-D-erythritol 2,4-cyclic diphosphate + CMP. It functions in the pathway isoprenoid biosynthesis; isopentenyl diphosphate biosynthesis via DXP pathway; isopentenyl diphosphate from 1-deoxy-D-xylulose 5-phosphate: step 4/6. In terms of biological role, involved in the biosynthesis of isopentenyl diphosphate (IPP) and dimethylallyl diphosphate (DMAPP), two major building blocks of isoprenoid compounds. Catalyzes the conversion of 4-diphosphocytidyl-2-C-methyl-D-erythritol 2-phosphate (CDP-ME2P) to 2-C-methyl-D-erythritol 2,4-cyclodiphosphate (ME-CPP) with a corresponding release of cytidine 5-monophosphate (CMP). This Chromohalobacter salexigens (strain ATCC BAA-138 / DSM 3043 / CIP 106854 / NCIMB 13768 / 1H11) protein is 2-C-methyl-D-erythritol 2,4-cyclodiphosphate synthase.